A 753-amino-acid polypeptide reads, in one-letter code: Polyribonucleotide nucleotidyltransferase (753 aa).

2 residues coordinate Mg(2+): D523 and D529. One can recognise a KH domain in the interval 589–648 (PRIISVRIPVDKIGAVIGPKGAMINQIQDDTGADITIEDDGTVLIGATDGASAEAARSAV). Residues 660-732 (GERYLGTVVK…DRGKLSLSPV (73 aa)) form the S1 motif domain. The disordered stretch occupies residues 733 to 753 (GAESDAVAETADAIESSQTEA).

This sequence belongs to the polyribonucleotide nucleotidyltransferase family. Requires Mg(2+) as cofactor.

The protein localises to the cytoplasm. The enzyme catalyses RNA(n+1) + phosphate = RNA(n) + a ribonucleoside 5'-diphosphate. Functionally, involved in mRNA degradation. Catalyzes the phosphorolysis of single-stranded polyribonucleotides processively in the 3'- to 5'-direction. The sequence is that of Polyribonucleotide nucleotidyltransferase from Micrococcus luteus (strain ATCC 4698 / DSM 20030 / JCM 1464 / CCM 169 / CCUG 5858 / IAM 1056 / NBRC 3333 / NCIMB 9278 / NCTC 2665 / VKM Ac-2230) (Micrococcus lysodeikticus).